Consider the following 448-residue polypeptide: Maintenance of mitochondrial morphology protein 1 (448 aa).

Residues 1–74 (MTESVIYSGT…LNHTWSFTQG (74 aa)) lie on the Lumenal side of the membrane. A helical transmembrane segment spans residues 75-95 (LVVGQLSVIVVVAIFIKFFVF). At 96–448 (ADSSATTTTT…IVDKTEEASI (353 aa)) the chain is on the cytoplasmic side. 2 disordered regions span residues 119–144 (RNKN…LNSP) and 303–357 (LQNV…SQED). Basic and acidic residues predominate over residues 127–140 (SNEDKDPNNNKEDD). Positions 164-419 (SPESLDWFNV…EPRFQVVKVP (256 aa)) constitute an SMP-LTD domain. Over residues 313–332 (PSNEPNSQNQTQQPTPVNNS) the composition is skewed to low complexity. A compositionally biased stretch (basic and acidic residues) spans 345 to 356 (ETKHSKAKRSQE).

It belongs to the MMM1 family. In terms of assembly, homodimer. Component of the ER-mitochondria encounter structure (ERMES) or MDM complex, composed of MMM1, MDM10, MDM12 and MDM34. An MMM1 homodimer associates with one molecule of MDM12 on each side in a pairwise head-to-tail manner, and the SMP-LTD domains of MMM1 and MDM12 generate a continuous hydrophobic tunnel for phospholipid trafficking.

The protein localises to the endoplasmic reticulum membrane. Component of the ERMES/MDM complex, which serves as a molecular tether to connect the endoplasmic reticulum (ER) and mitochondria. Components of this complex are involved in the control of mitochondrial shape and protein biogenesis, and function in nonvesicular lipid trafficking between the ER and mitochondria. The MDM12-MMM1 subcomplex functions in the major beta-barrel assembly pathway that is responsible for biogenesis of all outer membrane beta-barrel proteins, and acts in a late step after the SAM complex. The MDM10-MDM12-MMM1 subcomplex further acts in the TOM40-specific pathway after the action of the MDM12-MMM1 complex. Essential for establishing and maintaining the structure of mitochondria and maintenance of mtDNA nucleoids. The sequence is that of Maintenance of mitochondrial morphology protein 1 from Debaryomyces hansenii (strain ATCC 36239 / CBS 767 / BCRC 21394 / JCM 1990 / NBRC 0083 / IGC 2968) (Yeast).